Here is a 329-residue protein sequence, read N- to C-terminus: rRNA 2'-O-methyltransferase fibrillarin (329 aa).

Positions 1–85 (MAFGAPRGRG…GGARGGARGG (85 aa)) are disordered. Residues 13 to 84 (RGGFGGRGGS…RGGARGGARG (72 aa)) show a composition bias toward gly residues. S-adenosyl-L-methionine is bound by residues 181–182 (TS), 200–201 (EF), 225–226 (DA), and 245–248 (DVAQ).

This sequence belongs to the methyltransferase superfamily. Fibrillarin family. As to quaternary structure, component of box C/D small nucleolar ribonucleoprotein (snoRNP) particles that contain SNU13, NOP1, SIK1/NOP56 and NOP58, plus a guide RNA. By homology to other fibrillarins, some or all of the N-terminal domain arginines are modified to asymmetric dimethylarginine (DMA).

It is found in the nucleus. The protein resides in the nucleolus. It catalyses the reaction L-glutaminyl-[histone H2A] + S-adenosyl-L-methionine = N(5)-methyl-L-glutaminyl-[histone H2A] + S-adenosyl-L-homocysteine + H(+). In terms of biological role, S-adenosyl-L-methionine-dependent methyltransferase that has the ability to methylate both RNAs and proteins. Involved in pre-rRNA processing. Utilizes the methyl donor S-adenosyl-L-methionine to catalyze the site-specific 2'-hydroxyl methylation of ribose moieties in pre-ribosomal RNA. Site specificity is provided by a guide RNA that base pairs with the substrate. Methylation occurs at a characteristic distance from the sequence involved in base pairing with the guide RNA. Also acts as a protein methyltransferase by mediating methylation of 'Gln-105' of histone H2A (H2AQ105me), a modification that impairs binding of the FACT complex and is specifically present at 35S ribosomal DNA locus. This Debaryomyces hansenii (strain ATCC 36239 / CBS 767 / BCRC 21394 / JCM 1990 / NBRC 0083 / IGC 2968) (Yeast) protein is rRNA 2'-O-methyltransferase fibrillarin (NOP1).